The chain runs to 153 residues: 6,7-dimethyl-8-ribityllumazine synthase (153 aa).

Residues F21, A55–E57, and T79–I81 each bind 5-amino-6-(D-ribitylamino)uracil. Residue A84–T85 participates in (2S)-2-hydroxy-3-oxobutyl phosphate binding. Catalysis depends on H87, which acts as the Proton donor. F112 provides a ligand contact to 5-amino-6-(D-ribitylamino)uracil. R126 contributes to the (2S)-2-hydroxy-3-oxobutyl phosphate binding site.

The protein belongs to the DMRL synthase family. In terms of assembly, forms an icosahedral capsid composed of 60 subunits, arranged as a dodecamer of pentamers.

The catalysed reaction is (2S)-2-hydroxy-3-oxobutyl phosphate + 5-amino-6-(D-ribitylamino)uracil = 6,7-dimethyl-8-(1-D-ribityl)lumazine + phosphate + 2 H2O + H(+). It functions in the pathway cofactor biosynthesis; riboflavin biosynthesis; riboflavin from 2-hydroxy-3-oxobutyl phosphate and 5-amino-6-(D-ribitylamino)uracil: step 1/2. In terms of biological role, catalyzes the formation of 6,7-dimethyl-8-ribityllumazine by condensation of 5-amino-6-(D-ribitylamino)uracil with 3,4-dihydroxy-2-butanone 4-phosphate. This is the penultimate step in the biosynthesis of riboflavin. In Bacillus cereus (strain B4264), this protein is 6,7-dimethyl-8-ribityllumazine synthase.